The following is a 242-amino-acid chain: Biosynthetic peptidoglycan transglycosylase (242 aa).

Residues 21–41 form a helical membrane-spanning segment; that stretch reads VALVVFWGGGIALFSVVPVPF.

It belongs to the glycosyltransferase 51 family.

It is found in the cell inner membrane. It carries out the reaction [GlcNAc-(1-&gt;4)-Mur2Ac(oyl-L-Ala-gamma-D-Glu-L-Lys-D-Ala-D-Ala)](n)-di-trans,octa-cis-undecaprenyl diphosphate + beta-D-GlcNAc-(1-&gt;4)-Mur2Ac(oyl-L-Ala-gamma-D-Glu-L-Lys-D-Ala-D-Ala)-di-trans,octa-cis-undecaprenyl diphosphate = [GlcNAc-(1-&gt;4)-Mur2Ac(oyl-L-Ala-gamma-D-Glu-L-Lys-D-Ala-D-Ala)](n+1)-di-trans,octa-cis-undecaprenyl diphosphate + di-trans,octa-cis-undecaprenyl diphosphate + H(+). Its pathway is cell wall biogenesis; peptidoglycan biosynthesis. Functionally, peptidoglycan polymerase that catalyzes glycan chain elongation from lipid-linked precursors. The polypeptide is Biosynthetic peptidoglycan transglycosylase (Salmonella arizonae (strain ATCC BAA-731 / CDC346-86 / RSK2980)).